A 274-amino-acid polypeptide reads, in one-letter code: Rhamnulose-1-phosphate aldolase (274 aa).

Residue glutamate 117 is part of the active site. Zn(2+)-binding residues include histidine 141, histidine 143, and histidine 212.

The protein belongs to the aldolase class II family. RhaD subfamily. Homotetramer. Requires Zn(2+) as cofactor.

Its subcellular location is the cytoplasm. The enzyme catalyses L-rhamnulose 1-phosphate = (S)-lactaldehyde + dihydroxyacetone phosphate. Its pathway is carbohydrate degradation; L-rhamnose degradation; glycerone phosphate from L-rhamnose: step 3/3. Catalyzes the reversible cleavage of L-rhamnulose-1-phosphate to dihydroxyacetone phosphate (DHAP) and L-lactaldehyde. This is Rhamnulose-1-phosphate aldolase from Yersinia pseudotuberculosis serotype I (strain IP32953).